A 335-amino-acid polypeptide reads, in one-letter code: Probable phosphoglycerate mutase ARB_03491 (335 aa).

An N-terminal signal peptide occupies residues M1–A24. H108 acts as the Tele-phosphohistidine intermediate in catalysis. The Proton donor/acceptor role is filled by E211.

Belongs to the phosphoglycerate mutase family.

The protein resides in the secreted. Probable phosphomutase that may have a function related to the manipulation of phosphate groups on carbohydrates. The polypeptide is Probable phosphoglycerate mutase ARB_03491 (Arthroderma benhamiae (strain ATCC MYA-4681 / CBS 112371) (Trichophyton mentagrophytes)).